We begin with the raw amino-acid sequence, 210 residues long: Prolactin (210 aa).

The signal sequence occupies residues 1 to 23 (MARRSQGTKLHLAVLCLVVSCHA). 2 cysteine pairs are disulfide-bonded: Cys69–Cys183 and Cys200–Cys210.

It belongs to the somatotropin/prolactin family.

It localises to the secreted. This Oncorhynchus mykiss (Rainbow trout) protein is Prolactin (prl).